Here is a 104-residue protein sequence, read N- to C-terminus: Small ribosomal subunit protein uS10 (104 aa).

It belongs to the universal ribosomal protein uS10 family. Part of the 30S ribosomal subunit.

Its function is as follows. Involved in the binding of tRNA to the ribosomes. This Ruegeria pomeroyi (strain ATCC 700808 / DSM 15171 / DSS-3) (Silicibacter pomeroyi) protein is Small ribosomal subunit protein uS10.